A 248-amino-acid chain; its full sequence is MQILLEDPAKAPQAEALASQLGQTDLPQFALVFTAARLELRKLDEPKLGAVYVDFVEGAVAHRRKFGGGRGQSIAKAVGLKAGAMPRVVDATAGLGRDAFVLASLGCKVTMIERSPVVAALLQDGLARAALDPEIGPWVRERMQLRHGPAVETLLGLTERPDVIYLDPMFPHKQKSALVKKEMRVFQSLVGPDLDADALLPAALAMADKRVVVKRPDYAGWLNEHKPSMAIETKSNRFDVYVMAALAG.

S-adenosyl-L-methionine-binding positions include 97 to 98, 113 to 114, and aspartate 167; these read RD and ER.

It belongs to the methyltransferase superfamily. RsmJ family.

Its subcellular location is the cytoplasm. It catalyses the reaction guanosine(1516) in 16S rRNA + S-adenosyl-L-methionine = N(2)-methylguanosine(1516) in 16S rRNA + S-adenosyl-L-homocysteine + H(+). Functionally, specifically methylates the guanosine in position 1516 of 16S rRNA. This chain is Ribosomal RNA small subunit methyltransferase J, found in Aeromonas hydrophila subsp. hydrophila (strain ATCC 7966 / DSM 30187 / BCRC 13018 / CCUG 14551 / JCM 1027 / KCTC 2358 / NCIMB 9240 / NCTC 8049).